The primary structure comprises 318 residues: tRNA(Ile)-lysidine synthase (318 aa).

26 to 31 (SGGADS) provides a ligand contact to ATP.

This sequence belongs to the tRNA(Ile)-lysidine synthase family.

It is found in the cytoplasm. It carries out the reaction cytidine(34) in tRNA(Ile2) + L-lysine + ATP = lysidine(34) in tRNA(Ile2) + AMP + diphosphate + H(+). In terms of biological role, ligates lysine onto the cytidine present at position 34 of the AUA codon-specific tRNA(Ile) that contains the anticodon CAU, in an ATP-dependent manner. Cytidine is converted to lysidine, thus changing the amino acid specificity of the tRNA from methionine to isoleucine. The sequence is that of tRNA(Ile)-lysidine synthase from Nocardia farcinica (strain IFM 10152).